Here is a 365-residue protein sequence, read N- to C-terminus: Chaperone protein DnaJ (365 aa).

In terms of domain architecture, J spans Asp-5–Gly-71. The CR-type zinc-finger motif lies at Gly-128–Gln-206. The Zn(2+) site is built by Cys-141, Cys-144, Cys-158, Cys-161, Cys-180, Cys-183, Cys-194, and Cys-197. 4 CXXCXGXG motif repeats span residues Cys-141–Gly-148, Cys-158–Gly-165, Cys-180–Gly-187, and Cys-194–Gly-201.

It belongs to the DnaJ family. In terms of assembly, homodimer. It depends on Zn(2+) as a cofactor.

The protein resides in the cytoplasm. Functionally, participates actively in the response to hyperosmotic and heat shock by preventing the aggregation of stress-denatured proteins and by disaggregating proteins, also in an autonomous, DnaK-independent fashion. Unfolded proteins bind initially to DnaJ; upon interaction with the DnaJ-bound protein, DnaK hydrolyzes its bound ATP, resulting in the formation of a stable complex. GrpE releases ADP from DnaK; ATP binding to DnaK triggers the release of the substrate protein, thus completing the reaction cycle. Several rounds of ATP-dependent interactions between DnaJ, DnaK and GrpE are required for fully efficient folding. Also involved, together with DnaK and GrpE, in the DNA replication of plasmids through activation of initiation proteins. In Vesicomyosocius okutanii subsp. Calyptogena okutanii (strain HA), this protein is Chaperone protein DnaJ.